The primary structure comprises 505 residues: Glycerol kinase (505 aa).

Threonine 14 provides a ligand contact to ADP. Positions 14, 15, and 16 each coordinate ATP. A sn-glycerol 3-phosphate-binding site is contributed by threonine 14. Arginine 18 serves as a coordination point for ADP. The sn-glycerol 3-phosphate site is built by arginine 84, glutamate 85, tyrosine 136, and aspartate 246. Positions 84, 85, 136, 246, and 247 each coordinate glycerol. The ADP site is built by threonine 268 and glycine 311. Positions 268, 311, 315, and 412 each coordinate ATP. ADP-binding residues include glycine 412 and asparagine 416.

This sequence belongs to the FGGY kinase family.

The enzyme catalyses glycerol + ATP = sn-glycerol 3-phosphate + ADP + H(+). It functions in the pathway polyol metabolism; glycerol degradation via glycerol kinase pathway; sn-glycerol 3-phosphate from glycerol: step 1/1. With respect to regulation, inhibited by fructose 1,6-bisphosphate (FBP). Its function is as follows. Key enzyme in the regulation of glycerol uptake and metabolism. Catalyzes the phosphorylation of glycerol to yield sn-glycerol 3-phosphate. The sequence is that of Glycerol kinase from Vibrio cholerae serotype O1 (strain M66-2).